The chain runs to 231 residues: L-ribulose-5-phosphate 4-epimerase AraD (231 aa).

Substrate-binding positions include 27 to 28 (GN), 44 to 45 (SG), and 74 to 75 (SS). Zn(2+)-binding residues include Asp76, His95, and His97. Catalysis depends on Asp120, which acts as the Proton donor/acceptor. His171 contributes to the Zn(2+) binding site. The Proton donor/acceptor role is filled by Tyr229.

Belongs to the aldolase class II family. AraD/FucA subfamily. Homotetramer. The cofactor is Zn(2+).

The catalysed reaction is L-ribulose 5-phosphate = D-xylulose 5-phosphate. It functions in the pathway carbohydrate degradation; L-arabinose degradation via L-ribulose; D-xylulose 5-phosphate from L-arabinose (bacterial route): step 3/3. Inhibited by glycolohydroxamate at concentration above 0.1 mM. Involved in the degradation of L-arabinose. Catalyzes the interconversion of L-ribulose 5-phosphate (LRu5P) and D-xylulose 5-phosphate (D-Xu5P) via a retroaldol/aldol mechanism (carbon-carbon bond cleavage analogous to a class II aldolase reaction). The sequence is that of L-ribulose-5-phosphate 4-epimerase AraD from Escherichia coli (strain K12).